We begin with the raw amino-acid sequence, 208 residues long: Microtubule-associated protein Jupiter (208 aa).

Disordered regions lie at residues 24-43 (RPPG…QTPR) and 82-106 (RGQK…PGKN). Phosphoserine is present on serine 30. Residue threonine 41 is modified to Phosphothreonine. Over residues 82-93 (RGQKTVDSHSRL) the composition is skewed to basic and acidic residues. 2 positions are modified to phosphothreonine: threonine 98 and threonine 102. Serine 111, serine 139, and serine 150 each carry phosphoserine. Residues 132–208 (HYNGKSGSVS…PPGGYSSGLW (77 aa)) are disordered. Positions 137-150 (SGSVSSASSSVSSS) are enriched in low complexity. Polar residues-rich tracts occupy residues 151-165 (TENL…SEGN) and 178-189 (EYSQRQESSNGG).

The protein belongs to the MAP Jupiter family. Ubiquitous expression throughout development. Expressed during cell division in the syncytial embryo. Expressed in developing photoreceptors of the eye imaginal disk of the third larval stage. In adults, highly expressed in neurons of the brain, concentrated in axons. In the adult ovaries, expression accumulates in the germarium and the polar follicular cells as well as in the oocyte along the microtubule network.

It is found in the nucleus. It localises to the cytoplasm. Its subcellular location is the cytoskeleton. The protein localises to the spindle. Its function is as follows. Binds to all microtubule populations. In Drosophila melanogaster (Fruit fly), this protein is Microtubule-associated protein Jupiter.